The following is a 464-amino-acid chain: Siroheme synthase (464 aa).

Residues 1–203 (MEFLPLFHNL…GQGDEAERLL (203 aa)) are precorrin-2 dehydrogenase /sirohydrochlorin ferrochelatase. NAD(+)-binding positions include 22–23 (EI) and 43–44 (PQ). S128 is modified (phosphoserine). Residues 216–464 (GEVYLVGAGP…KWFEGAQSQV (249 aa)) are uroporphyrinogen-III C-methyltransferase. P225 provides a ligand contact to S-adenosyl-L-methionine. D248 (proton acceptor) is an active-site residue. The active-site Proton donor is K270. S-adenosyl-L-methionine-binding positions include 301 to 303 (GGD), I306, 331 to 332 (TA), M383, and G412.

The protein in the N-terminal section; belongs to the precorrin-2 dehydrogenase / sirohydrochlorin ferrochelatase family. In the C-terminal section; belongs to the precorrin methyltransferase family.

The enzyme catalyses uroporphyrinogen III + 2 S-adenosyl-L-methionine = precorrin-2 + 2 S-adenosyl-L-homocysteine + H(+). It carries out the reaction precorrin-2 + NAD(+) = sirohydrochlorin + NADH + 2 H(+). It catalyses the reaction siroheme + 2 H(+) = sirohydrochlorin + Fe(2+). Its pathway is cofactor biosynthesis; adenosylcobalamin biosynthesis; precorrin-2 from uroporphyrinogen III: step 1/1. It participates in cofactor biosynthesis; adenosylcobalamin biosynthesis; sirohydrochlorin from precorrin-2: step 1/1. It functions in the pathway porphyrin-containing compound metabolism; siroheme biosynthesis; precorrin-2 from uroporphyrinogen III: step 1/1. The protein operates within porphyrin-containing compound metabolism; siroheme biosynthesis; siroheme from sirohydrochlorin: step 1/1. Its pathway is porphyrin-containing compound metabolism; siroheme biosynthesis; sirohydrochlorin from precorrin-2: step 1/1. In terms of biological role, multifunctional enzyme that catalyzes the SAM-dependent methylations of uroporphyrinogen III at position C-2 and C-7 to form precorrin-2 via precorrin-1. Then it catalyzes the NAD-dependent ring dehydrogenation of precorrin-2 to yield sirohydrochlorin. Finally, it catalyzes the ferrochelation of sirohydrochlorin to yield siroheme. The polypeptide is Siroheme synthase (Pseudomonas fluorescens (strain SBW25)).